Consider the following 534-residue polypeptide: EH domain-containing protein 1 (534 aa).

The residue at position 1 (methionine 1) is an N-acetylmethionine. In terms of domain architecture, Dynamin-type G spans 55-286; it reads FDNKPMVLLV…DLFKDIQSLP (232 aa). The segment at 65-72 is G1 motif; sequence GQYSTGKT. 65 to 72 provides a ligand contact to ATP; it reads GQYSTGKT. The tract at residues 91-92 is G2 motif; sequence EP. The segment at 153 to 156 is G3 motif; that stretch reads DTPG. A coiled-coil region spans residues 198–227; it reads DEFSEVIKALKNHEDKIRVVLNKADQIETQ. Positions 219–222 are G4 motif; that stretch reads NKAD. Lysine 220 contacts ATP. Residue isoleucine 243 is a region of interest, G5 motif. Residue tryptophan 258 participates in ATP binding. A phosphoserine mark is found at serine 355 and serine 456. Residues 444 to 532 enclose the EH domain; the sequence is DKPTYDEIFY…PHLIPPSKRR (89 aa). The EF-hand domain maps to 476 to 511; it reads LPNTVLGKIWKLADVDKDGLLDDEEFALANHLIKVK. Aspartate 489, aspartate 491, aspartate 493, and glutamate 500 together coordinate Ca(2+).

This sequence belongs to the TRAFAC class dynamin-like GTPase superfamily. Dynamin/Fzo/YdjA family. EHD subfamily. In terms of assembly, homooligomer, and heterooligomer with EHD2, EHD3 and EHD4, ATP-binding is required for heterooligomerization. Interacts (via EH domain) with MICALL1 (via NPF1 motif); the interaction is direct and recruits EHD1 to membranes. Interacts with RAB35; the interaction is indirect through MICALL1 and recruits EHD1 to membranes. Interacts (via EH domain) with PACSIN2 (via NPF motifs); regulates localization to tubular recycling endosome membranes. Interacts with PACSIN1. Interacts with RAB8A. Interacts with FER1L5 (via second C2 domain). Interacts with MYOF. Interacts with ZFYVE20. Interacts (via EH domain) with RAB11FIP2.

The protein resides in the recycling endosome membrane. It is found in the early endosome membrane. It localises to the cell membrane. Its subcellular location is the cell projection. The protein localises to the cilium membrane. Its function is as follows. ATP- and membrane-binding protein that controls membrane reorganization/tubulation upon ATP hydrolysis. In vitro causes vesiculation of endocytic membranes. Acts in early endocytic membrane fusion and membrane trafficking of recycling endosomes. Recruited to endosomal membranes upon nerve growth factor stimulation, indirectly regulates neurite outgrowth. Plays a role in myoblast fusion. Involved in the unidirectional retrograde dendritic transport of endocytosed BACE1 and in efficient sorting of BACE1 to axons implicating a function in neuronal APP processing. Plays a role in the formation of the ciliary vesicle (CV), an early step in cilium biogenesis. Proposed to be required for the fusion of distal appendage vesicles (DAVs) to form the CV by recruiting SNARE complex component SNAP29. Is required for recruitment of transition zone proteins CEP290, RPGRIP1L, TMEM67 and B9D2, and of IFT20 following DAV reorganization before Rab8-dependent ciliary membrane extension. Required for the loss of CCP110 form the mother centriole essential for the maturation of the basal body during ciliogenesis. The protein is EH domain-containing protein 1 of Rattus norvegicus (Rat).